Reading from the N-terminus, the 134-residue chain is Protein E6 (134 aa).

Zinc fingers lie at residues 15–51 (CLQC…CQIC) and 88–124 (CYYC…CYSC).

This sequence belongs to the papillomaviridae E6 protein family. As to quaternary structure, forms homodimers. Interacts with ubiquitin-protein ligase UBE3A/E6-AP; this interaction stimulates UBE3A ubiquitin activity. Interacts with host BAK1.

The protein localises to the host cytoplasm. It localises to the host nucleus. Plays a major role in the induction and maintenance of cellular transformation. E6 associates with host UBE3A/E6-AP ubiquitin-protein ligase and modulates its activity. Protects host keratinocytes from apoptosis by mediating the degradation of host BAK1. May also inhibit host immune response. This chain is Protein E6, found in Bos taurus (Bovine).